A 370-amino-acid polypeptide reads, in one-letter code: Ubiquinone biosynthesis O-methyltransferase, mitochondrial (370 aa).

Residues Met-1–Tyr-86 constitute a mitochondrion transit peptide. Arg-125 contacts S-adenosyl-L-methionine. Residues Lys-144 and Lys-150 each carry the N6-acetyllysine modification. Residues Gly-155 and Asp-176 each contribute to the S-adenosyl-L-methionine site. Lys-197 is subject to N6-acetyllysine. Ser-223 lines the S-adenosyl-L-methionine pocket. Residues Glu-224, Glu-227, and His-228 each coordinate Mg(2+). Residues Ala-336 to Thr-370 form a disordered region.

Belongs to the class I-like SAM-binding methyltransferase superfamily. UbiG/COQ3 family. In terms of assembly, component of a multi-subunit COQ enzyme complex, composed of at least COQ3, COQ4, COQ5, COQ6, COQ7 and COQ9. Mg(2+) is required as a cofactor.

It is found in the mitochondrion inner membrane. The catalysed reaction is 3,4-dihydroxy-5-(all-trans-decaprenyl)benzoate + S-adenosyl-L-methionine = 4-hydroxy-3-methoxy-5-(all-trans-decaprenyl)benzoate + S-adenosyl-L-homocysteine + H(+). It carries out the reaction a 3-demethylubiquinone + S-adenosyl-L-methionine = a ubiquinone + S-adenosyl-L-homocysteine. It catalyses the reaction 3-demethylubiquinol-10 + S-adenosyl-L-methionine = ubiquinol-10 + S-adenosyl-L-homocysteine + H(+). Its pathway is cofactor biosynthesis; ubiquinone biosynthesis. Functionally, O-methyltransferase required for two non-consecutive steps during ubiquinone biosynthesis. Catalyzes the 2 O-methylation of 3,4-dihydroxy-5-(all-trans-decaprenyl)benzoic acid into 4-hydroxy-3-methoxy-5-(all-trans-decaprenyl)benzoic acid. Also catalyzes the last step of ubiquinone biosynthesis by mediating methylation of 3-demethylubiquinone into ubiquinone. Also able to mediate the methylation of 3-demethylubiquinol-10 into ubiquinol-10. This chain is Ubiquinone biosynthesis O-methyltransferase, mitochondrial, found in Mus musculus (Mouse).